A 30-amino-acid chain; its full sequence is NIVDVPCRDDYYRDSSGNGVYDQLGGCGAA.

Cysteines 7 and 27 form a disulfide.

It is found in the secreted. The protein resides in the nematocyst. Possible voltage-gated potassium channel (Kv) blocker. The protein is U-actitoxin-Bcg2a of Bunodosoma cangicum (Sea anemone).